Reading from the N-terminus, the 395-residue chain is Flap endonuclease 1 (395 aa).

An N-domain region spans residues M1–K104. D34 contributes to the Mg(2+) binding site. DNA is bound by residues R47 and R70. 5 residues coordinate Mg(2+): D86, E158, E160, D179, and D181. The interval E122 to H253 is I-domain. E158 lines the DNA pocket. 2 residues coordinate DNA: G231 and D233. Position 233 (D233) interacts with Mg(2+). Positions Q341–F349 are interaction with PCNA. Residues A360–S389 are compositionally biased toward basic and acidic residues. Positions A360 to T395 are disordered.

Belongs to the XPG/RAD2 endonuclease family. FEN1 subfamily. As to quaternary structure, interacts with PCNA. Three molecules of FEN1 bind to one PCNA trimer with each molecule binding to one PCNA monomer. PCNA stimulates the nuclease activity without altering cleavage specificity. The cofactor is Mg(2+). In terms of processing, phosphorylated. Phosphorylation upon DNA damage induces relocalization to the nuclear plasma.

The protein resides in the nucleus. The protein localises to the nucleolus. It is found in the nucleoplasm. Its subcellular location is the mitochondrion. Functionally, structure-specific nuclease with 5'-flap endonuclease and 5'-3' exonuclease activities involved in DNA replication and repair. During DNA replication, cleaves the 5'-overhanging flap structure that is generated by displacement synthesis when DNA polymerase encounters the 5'-end of a downstream Okazaki fragment. It enters the flap from the 5'-end and then tracks to cleave the flap base, leaving a nick for ligation. Also involved in the long patch base excision repair (LP-BER) pathway, by cleaving within the apurinic/apyrimidinic (AP) site-terminated flap. Acts as a genome stabilization factor that prevents flaps from equilibrating into structures that lead to duplications and deletions. Also possesses 5'-3' exonuclease activity on nicked or gapped double-stranded DNA, and exhibits RNase H activity. Also involved in replication and repair of rDNA and in repairing mitochondrial DNA. This Ajellomyces capsulatus (strain NAm1 / WU24) (Darling's disease fungus) protein is Flap endonuclease 1.